The sequence spans 753 residues: 5-methyltetrahydropteroyltriglutamate--homocysteine methyltransferase (753 aa).

5-methyltetrahydropteroyltri-L-glutamate-binding positions include 17–20 (RELK) and Lys-117. Residues 431–433 (IGS) and Glu-484 each bind L-homocysteine. L-methionine is bound by residues 431–433 (IGS) and Glu-484. 5-methyltetrahydropteroyltri-L-glutamate is bound by residues 515–516 (RC) and Trp-561. Residue Asp-599 participates in L-homocysteine binding. Asp-599 contributes to the L-methionine binding site. A 5-methyltetrahydropteroyltri-L-glutamate-binding site is contributed by Glu-605. Positions 641, 643, and 665 each coordinate Zn(2+). His-694 serves as the catalytic Proton donor. Cys-726 is a Zn(2+) binding site.

This sequence belongs to the vitamin-B12 independent methionine synthase family. Requires Zn(2+) as cofactor.

The catalysed reaction is 5-methyltetrahydropteroyltri-L-glutamate + L-homocysteine = tetrahydropteroyltri-L-glutamate + L-methionine. It functions in the pathway amino-acid biosynthesis; L-methionine biosynthesis via de novo pathway; L-methionine from L-homocysteine (MetE route): step 1/1. Functionally, catalyzes the transfer of a methyl group from 5-methyltetrahydrofolate to homocysteine resulting in methionine formation. The protein is 5-methyltetrahydropteroyltriglutamate--homocysteine methyltransferase of Escherichia coli O8 (strain IAI1).